A 450-amino-acid chain; its full sequence is Tol-Pal system protein TolB (450 aa).

The first 37 residues, Met-1–Gly-37, serve as a signal peptide directing secretion.

The protein belongs to the TolB family. In terms of assembly, the Tol-Pal system is composed of five core proteins: the inner membrane proteins TolA, TolQ and TolR, the periplasmic protein TolB and the outer membrane protein Pal. They form a network linking the inner and outer membranes and the peptidoglycan layer.

It localises to the periplasm. In terms of biological role, part of the Tol-Pal system, which plays a role in outer membrane invagination during cell division and is important for maintaining outer membrane integrity. In Nitrobacter winogradskyi (strain ATCC 25391 / DSM 10237 / CIP 104748 / NCIMB 11846 / Nb-255), this protein is Tol-Pal system protein TolB.